The sequence spans 104 residues: Phycoerythrin alpha-2 chain, chloroplastic (104 aa).

The N-terminal 37 residues, 1–37 (MSAKIIAFSAVVATASAFAPTAGFVPRLRSGATSVNM), are a transit peptide targeting the chloroplast. A 5-hydroxylysine modification is found at Lys-41. Positions 56 and 58 each coordinate 15,16-dihydrobiliverdin. The tract at residues 61 to 63 (KEY) is 15,16-dihydrobiliverdin chromophore. Residue Lys-78 coordinates 15,16-dihydrobiliverdin.

Belongs to the phycoerythrin family. As to quaternary structure, heterotetramer of 2 different alpha chains and 2 identical beta chains. The subunit composition could comprise of any combination of 2 out of 4 different alpha units with an invariant beta unit. In terms of processing, contains one covalently linked 15,16-dihydrobiliverdin chromophore.

The protein localises to the plastid. It is found in the chloroplast thylakoid membrane. Light-harvesting photosynthetic tetrapyrrole chromophore-protein from the phycobiliprotein complex. This is Phycoerythrin alpha-2 chain, chloroplastic (cpeA2) from Rhodomonas sp. (strain CS 24) (Chroomonas sp. (strain CS24)).